A 298-amino-acid polypeptide reads, in one-letter code: MSEQTPHHCGSVAVIGRPNVGKSTLTNALVGAKVSIVSNRPQTTRHRLLGIATYPEGQLVLVDTPGLHKVQKRAMNRVMNRAARGSLEGVDAGLLVIEAGRWDEEDSLAFNVLRDAGIPVVLVVNKIDRLKEKGALLPFLQQVTEGRDFAAVHPISAQKRNGLEALVRDVLKLLPEAPPMFGEDEITDRSQRFLAGELVREQLMRQLGEELPYATTVEIERFTEDGNLLRIGAVIWVEREGQKAIVIGKGGARLKEIGAKSRLQMERLFGAKVFLETWVRVREGWSDDEAALKAFGYE.

One can recognise an Era-type G domain in the interval 8 to 176 (HCGSVAVIGR…VRDVLKLLPE (169 aa)). The tract at residues 16-23 (GRPNVGKS) is G1. Position 16–23 (16–23 (GRPNVGKS)) interacts with GTP. Residues 42-46 (QTTRH) are G2. The segment at 63-66 (DTPG) is G3. Residues 63-67 (DTPGL) and 125-128 (NKID) each bind GTP. Residues 125-128 (NKID) form a G4 region. Positions 155–157 (ISA) are G5. In terms of domain architecture, KH type-2 spans 199-283 (VREQLMRQLG…FLETWVRVRE (85 aa)).

This sequence belongs to the TRAFAC class TrmE-Era-EngA-EngB-Septin-like GTPase superfamily. Era GTPase family. As to quaternary structure, monomer.

The protein resides in the cytoplasm. The protein localises to the cell inner membrane. Its function is as follows. An essential GTPase that binds both GDP and GTP, with rapid nucleotide exchange. Plays a role in 16S rRNA processing and 30S ribosomal subunit biogenesis and possibly also in cell cycle regulation and energy metabolism. This chain is GTPase Era, found in Stenotrophomonas maltophilia (strain K279a).